Here is a 209-residue protein sequence, read N- to C-terminus: Uracil phosphoribosyltransferase (209 aa).

5-phospho-alpha-D-ribose 1-diphosphate-binding positions include R79, R104, and 131–139 (DPMLATGGS). Uracil-binding positions include I194 and 199-201 (GDA). D200 contributes to the 5-phospho-alpha-D-ribose 1-diphosphate binding site.

This sequence belongs to the UPRTase family. Requires Mg(2+) as cofactor.

The enzyme catalyses UMP + diphosphate = 5-phospho-alpha-D-ribose 1-diphosphate + uracil. It participates in pyrimidine metabolism; UMP biosynthesis via salvage pathway; UMP from uracil: step 1/1. Its activity is regulated as follows. Allosterically activated by GTP. Its function is as follows. Catalyzes the conversion of uracil and 5-phospho-alpha-D-ribose 1-diphosphate (PRPP) to UMP and diphosphate. The sequence is that of Uracil phosphoribosyltransferase from Clostridium kluyveri (strain NBRC 12016).